We begin with the raw amino-acid sequence, 489 residues long: MSVYGLQRLYIGGGYVDATSGKTFDTFDPATGELLAQVQQASAADVDRAVASAQEGQREWAAMTAMQRSRILRRAVELLRERNDELAAIETRDTGKPIGETLAVDIVTGADVIEYYAGLATAIEGLQVPLRAESFVYTRREPLGVCAGIGAWNYPIQIACWKTAPALAAGNAMVFKPSEVTPLTALKLAEIYTEAGVPAGVFNVVQGDGSVGALLTGHPDIAKVSFTGGVETGKKVMSLAGASSLKEVTMELGGKSPLIVFDDADLDRAADIAVTANFFSSGQVCTNGTRVFVHRSIKDAFTQKVLERVKRIRVGKPTDADTNFGPLVSAAQLDKVLGFIESGKAEGAKLLAGGTRLTDGHFGSGQYVAPTVFGDCRDDMKIVREEIFGPVMSILEFESEDEVIARANDTHYGLAAGVVTENLSRAHRAIHRLEAGICWINTWGESPAEMPVGGYKQSGVGRENGITTLEHYTRIKSVQVELGRYNPVF.

Threonine 26 and aspartate 93 together coordinate K(+). 150-152 (GAW) is an NAD(+) binding site. The active-site Charge relay system is lysine 162. 176 to 179 (KPSE) serves as a coordination point for NAD(+). Valine 180 is a binding site for K(+). 229 to 232 (GVET) contacts NAD(+). Leucine 245 serves as a coordination point for K(+). Glutamate 251 functions as the Proton acceptor in the catalytic mechanism. NAD(+) is bound by residues glycine 253, cysteine 285, and glutamate 386. The Nucleophile role is filled by cysteine 285. Cysteine 285 is subject to Cysteine sulfenic acid (-SOH). The K(+) site is built by lysine 456 and glycine 459. The active-site Charge relay system is glutamate 463.

Belongs to the aldehyde dehydrogenase family. Dimer of dimers. K(+) serves as cofactor.

The enzyme catalyses betaine aldehyde + NAD(+) + H2O = glycine betaine + NADH + 2 H(+). Its pathway is amine and polyamine biosynthesis; betaine biosynthesis via choline pathway; betaine from betaine aldehyde: step 1/1. Involved in the biosynthesis of the osmoprotectant glycine betaine. Catalyzes the irreversible oxidation of betaine aldehyde to the corresponding acid. The chain is Betaine aldehyde dehydrogenase from Burkholderia orbicola (strain AU 1054).